A 442-amino-acid polypeptide reads, in one-letter code: Histidinol dehydrogenase (442 aa).

Positions 138, 199, and 222 each coordinate NAD(+). Serine 245, glutamine 267, and histidine 270 together coordinate substrate. The Zn(2+) site is built by glutamine 267 and histidine 270. Catalysis depends on proton acceptor residues glutamate 335 and histidine 336. Positions 336, 369, 423, and 428 each coordinate substrate. Aspartate 369 provides a ligand contact to Zn(2+). Residue histidine 428 coordinates Zn(2+).

This sequence belongs to the histidinol dehydrogenase family. Requires Zn(2+) as cofactor.

The catalysed reaction is L-histidinol + 2 NAD(+) + H2O = L-histidine + 2 NADH + 3 H(+). Its pathway is amino-acid biosynthesis; L-histidine biosynthesis; L-histidine from 5-phospho-alpha-D-ribose 1-diphosphate: step 9/9. In terms of biological role, catalyzes the sequential NAD-dependent oxidations of L-histidinol to L-histidinaldehyde and then to L-histidine. The chain is Histidinol dehydrogenase from Ralstonia nicotianae (strain ATCC BAA-1114 / GMI1000) (Ralstonia solanacearum).